We begin with the raw amino-acid sequence, 74 residues long: Exodeoxyribonuclease 7 small subunit (74 aa).

Belongs to the XseB family. In terms of assembly, heterooligomer composed of large and small subunits.

It is found in the cytoplasm. The enzyme catalyses Exonucleolytic cleavage in either 5'- to 3'- or 3'- to 5'-direction to yield nucleoside 5'-phosphates.. Functionally, bidirectionally degrades single-stranded DNA into large acid-insoluble oligonucleotides, which are then degraded further into small acid-soluble oligonucleotides. This chain is Exodeoxyribonuclease 7 small subunit, found in Neisseria meningitidis serogroup C / serotype 2a (strain ATCC 700532 / DSM 15464 / FAM18).